Here is a 337-residue protein sequence, read N- to C-terminus: Phosphate acyltransferase (337 aa).

It belongs to the PlsX family. In terms of assembly, homodimer. Probably interacts with PlsY.

Its subcellular location is the cytoplasm. The enzyme catalyses a fatty acyl-[ACP] + phosphate = an acyl phosphate + holo-[ACP]. Its pathway is lipid metabolism; phospholipid metabolism. In terms of biological role, catalyzes the reversible formation of acyl-phosphate (acyl-PO(4)) from acyl-[acyl-carrier-protein] (acyl-ACP). This enzyme utilizes acyl-ACP as fatty acyl donor, but not acyl-CoA. The polypeptide is Phosphate acyltransferase (Polynucleobacter necessarius subsp. necessarius (strain STIR1)).